A 218-amino-acid chain; its full sequence is Pyridoxine/pyridoxamine 5'-phosphate oxidase (218 aa).

Residues 14–17 (RREY) and lysine 72 each bind substrate. FMN contacts are provided by residues 67–72 (RIVLLK), 82–83 (YT), arginine 88, lysine 89, and glutamine 111. Residues tyrosine 129, arginine 133, and serine 137 each contribute to the substrate site. Residues 146 to 147 (QS) and tryptophan 191 each bind FMN. 197 to 199 (RLH) provides a ligand contact to substrate. An FMN-binding site is contributed by arginine 201.

This sequence belongs to the pyridoxamine 5'-phosphate oxidase family. As to quaternary structure, homodimer. It depends on FMN as a cofactor.

It catalyses the reaction pyridoxamine 5'-phosphate + O2 + H2O = pyridoxal 5'-phosphate + H2O2 + NH4(+). The enzyme catalyses pyridoxine 5'-phosphate + O2 = pyridoxal 5'-phosphate + H2O2. Its pathway is cofactor metabolism; pyridoxal 5'-phosphate salvage; pyridoxal 5'-phosphate from pyridoxamine 5'-phosphate: step 1/1. It participates in cofactor metabolism; pyridoxal 5'-phosphate salvage; pyridoxal 5'-phosphate from pyridoxine 5'-phosphate: step 1/1. Catalyzes the oxidation of either pyridoxine 5'-phosphate (PNP) or pyridoxamine 5'-phosphate (PMP) into pyridoxal 5'-phosphate (PLP). The chain is Pyridoxine/pyridoxamine 5'-phosphate oxidase from Enterobacter sp. (strain 638).